The chain runs to 150 residues: C-type lectin 37Db (150 aa).

The first 20 residues, 1–20 (MMVKLLLLFLVCWSALPLES), serve as a signal peptide directing secretion. A C-type lectin domain is found at 31 to 148 (IGEKQYYISL…CYSSVAFICQ (118 aa)). 2 disulfide bridges follow: C52-C147 and C122-C139. 2 N-linked (GlcNAc...) asparagine glycosylation sites follow: N107 and N115.

Its subcellular location is the secreted. In terms of biological role, galactose-specific lectin that displays calcium-dependent activity. Binds to the surface of hemocytes and enhances hemocyte encapsulation and melanization. This is likely by interacting with carbohydrates on the surface of the hemocytes. Also displays agglutination activity against the Gram-negative bacterium E.coli. The sequence is that of C-type lectin 37Db from Drosophila melanogaster (Fruit fly).